The sequence spans 263 residues: 7beta-hydroxysteroid dehydrogenase (263 aa).

NADP(+)-binding positions include Thr-17–Gly-21, Arg-40–Arg-41, and Asp-66–Phe-67. The active-site Proton acceptor is the Tyr-156. Ser-240 contacts NADP(+).

It belongs to the short-chain dehydrogenases/reductases (SDR) family.

The catalysed reaction is a 7beta-hydroxysteroid + NADP(+) = a 7-oxosteroid + NADPH + H(+). It carries out the reaction 7-oxolithocholate + NADPH + H(+) = ursodeoxycholate + NADP(+). In terms of biological role, 7beta-hydroxysteroid dehydrogenase that catalyzes the reduction of the 7-oxo group of 7-oxo-lithocholate (7-oxo-LCA), to yield ursodeoxycholate (UDCA). As R.gnavus is a common core bacterium of the human gut microbiota, this enzyme contributes to the formation of UDCA in the human colon. UDCA is regarded as a chemopreventive beneficial secondary bile acid due to its low hydrophobicity; it protects hepatocytes and bile duct epithelial cells against necrosis and apoptosis induced by more hydrophobic secondary bile acids like deoxycholate (DCA). This enzyme is also able to catalyze the reverse reaction in vitro, i.e. the oxidation of the 7beta-hydroxy group of UDCA to 7-oxo-LCA, but much less efficiently than the reduction reaction. This chain is 7beta-hydroxysteroid dehydrogenase, found in Mediterraneibacter gnavus (strain ATCC 29149 / DSM 114966 / JCM 6515 / VPI C7-9) (Ruminococcus gnavus).